The primary structure comprises 262 residues: Acyl-[acyl-carrier-protein]--UDP-N-acetylglucosamine O-acyltransferase (262 aa).

The protein belongs to the transferase hexapeptide repeat family. LpxA subfamily. In terms of assembly, homotrimer.

It is found in the cytoplasm. It catalyses the reaction a (3R)-hydroxyacyl-[ACP] + UDP-N-acetyl-alpha-D-glucosamine = a UDP-3-O-[(3R)-3-hydroxyacyl]-N-acetyl-alpha-D-glucosamine + holo-[ACP]. It functions in the pathway glycolipid biosynthesis; lipid IV(A) biosynthesis; lipid IV(A) from (3R)-3-hydroxytetradecanoyl-[acyl-carrier-protein] and UDP-N-acetyl-alpha-D-glucosamine: step 1/6. Functionally, involved in the biosynthesis of lipid A, a phosphorylated glycolipid that anchors the lipopolysaccharide to the outer membrane of the cell. The sequence is that of Acyl-[acyl-carrier-protein]--UDP-N-acetylglucosamine O-acyltransferase from Aliivibrio fischeri (strain ATCC 700601 / ES114) (Vibrio fischeri).